Consider the following 277-residue polypeptide: Prohibitin-3, mitochondrial (277 aa).

N-acetylglycine is present on G2. Over 2-6 (GSQQA) the chain is Mitochondrial matrix. Residues 7–28 (AVSFLSNLAKAAFGLGTAATVL) form a helical; Signal-anchor for type II membrane protein membrane-spanning segment. The Mitochondrial intermembrane portion of the chain corresponds to 29-277 (NTSLFTVDGG…GQSMLFALNR (249 aa)).

The protein belongs to the prohibitin family. As to quaternary structure, component of a prohibitin multimeric complex in mitochondrial membranes. Mostly expressed in proliferative tissues, including vasculature, shoot and root apical tissues. Expressed in roots, stems, leaves and flowers (at protein level).

It localises to the cell membrane. The protein resides in the mitochondrion inner membrane. It is found in the nucleus. The protein localises to the cytoplasm. Its function is as follows. Prohibitin probably acts as a holdase/unfoldase for the stabilization of newly synthesized mitochondrial proteins. Necessary for mitochondrial and cell metabolism and biogenesis. Required to regulate the ethylene-mediated signaling; involved in growth maintenance in the presence of ethylene. Functions in nitric oxide (NO)-mediated responses and in hydrogen peroxide-induced NO accumulation. The polypeptide is Prohibitin-3, mitochondrial (PHB3) (Arabidopsis thaliana (Mouse-ear cress)).